A 151-amino-acid chain; its full sequence is Large ribosomal subunit protein bL9 (151 aa).

This sequence belongs to the bacterial ribosomal protein bL9 family.

Functionally, binds to the 23S rRNA. The protein is Large ribosomal subunit protein bL9 of Chlorobium limicola (strain DSM 245 / NBRC 103803 / 6330).